The sequence spans 88 residues: Small ribosomal subunit protein bS16 (88 aa).

Belongs to the bacterial ribosomal protein bS16 family.

In Sorangium cellulosum (strain So ce56) (Polyangium cellulosum (strain So ce56)), this protein is Small ribosomal subunit protein bS16.